Here is a 1450-residue protein sequence, read N- to C-terminus: Fanconi anemia group D2 protein homolog (1450 aa).

The interval 1 to 37 (MISKRRRLDSEDKENLTEDASKTMPLSKLAKKSHNSH) is disordered. The interaction with FANCE stretch occupies residues 1–289 (MISKRRRLDS…VKFLLHSVTD (289 aa)). Basic and acidic residues predominate over residues 8–21 (LDSEDKENLTEDAS). Ser220 carries the phosphoserine modification. The interval 246–357 (VFSSLRLDPN…IKSAIRYEKT (112 aa)) is interaction with BRCA2. Lys559 participates in a covalent cross-link: Glycyl lysine isopeptide (Lys-Gly) (interchain with G-Cter in ubiquitin). Ser714 bears the Phosphoserine mark. Residues 853–879 (SAVAAKNRNKGKTGGKKQKADSNKASC) form a disordered region. Positions 859–869 (NRNKGKTGGKK) are enriched in basic residues. 3 positions are modified to phosphoserine: Ser1255, Ser1404, and Ser1412. Residues 1398–1450 (ISQDPSSSESNAEDSEDGVTSHVSRNRATEDGEDEASDEQKDQDSDESDDSSS) are disordered. Residue Thr1426 is modified to Phosphothreonine. At Ser1434 the chain carries Phosphoserine. The segment covering 1441 to 1450 (DSDESDDSSS) has biased composition (acidic residues).

The protein belongs to the Fanconi anemia protein FANCD2 family. In terms of assembly, homodimer; cannot be ubiquitinated and does not bind DNA. Part of a FANCI-FANCD2 heterodimeric complex that binds and scans dsDNA for DNA damage. Interacts directly with FANCE and FANCI. Interacts with USP1 and MEN1. The ubiquitinated form specifically interacts with BRCA1 and BLM. Both the nonubiquitinated and the monoubiquitinated forms interact with BRCA2; this interaction is mediated by phosphorylated FANCG and the complex also includes XCCR3. The ubiquitinated form specifically interacts with MTMR15/FAN1 (via UBZ-type zinc finger), leading to recruit MTMR15/FAN1 to sites of DNA damage. Interacts with DCLRE1B/Apollo. Interacts with POLN. Interacts with UHRF1 and UHRF2; these interactions promote FANCD2 activation. In terms of processing, monoubiquitinated on Lys-559 during S phase and upon genotoxic stress by FANCL in complex with E2 ligases UBE2T or UBE2W. Deubiquitinated by USP1 as cells enter G2/M, or once DNA repair is completed. Monoubiquitination requires the joint intervention of the FANC core complex, including FANCA, FANCB, FANCC, FANCE, FANCF, FANCG, and FANCM, and proteins involved in cell cycle checkpoints and DNA repair, including RPA1, ATR, CHEK1 and BRCA1, and is mediated by FANCL/PHF9. Monoubiquitination prevents DNA release from the FANCI-FANCD2 complex. FANCD2 is only ubiquitinated in the FANCI-FANCD2 complex and the monoubiquitination of FANCD2 is promoted by phosphorylation of FANCI. Ubiquitination is required for binding to chromatin, interaction with BRCA1, BRCA2 and MTMR15/FAN1, DNA repair, and normal cell cycle progression. Post-translationally, phosphorylated on several sites including Ser-220 and Ser-1399 in response to genotoxic stress by ATM and/or ATR.

Its subcellular location is the nucleus. Its function is as follows. Required for maintenance of chromosomal stability. Promotes accurate and efficient pairing of homologs during meiosis. Involved in the repair of DNA double-strand breaks, both by homologous recombination and single-strand annealing. The FANCI-FANCD2 complex binds and scans double-stranded DNA (dsDNA) for DNA damage; this complex stalls at DNA junctions between double-stranded DNA and single-stranded DNA. May participate in S phase and G2 phase checkpoint activation upon DNA damage. Plays a role in preventing breakage and loss of missegregating chromatin at the end of cell division, particularly after replication stress. Promotes BRCA2/FANCD1 loading onto damaged chromatin. May also be involved in B-cell immunoglobulin isotype switching. In Mus musculus (Mouse), this protein is Fanconi anemia group D2 protein homolog (Fancd2).